The following is a 147-amino-acid chain: Ribosome-binding factor A (147 aa).

The tract at residues 122–147 (QQQFGSVDDDVIENDIEESDDTEGKV) is disordered. Residues 128-147 (VDDDVIENDIEESDDTEGKV) are compositionally biased toward acidic residues.

The protein belongs to the RbfA family. As to quaternary structure, monomer. Binds 30S ribosomal subunits, but not 50S ribosomal subunits or 70S ribosomes.

It localises to the cytoplasm. In terms of biological role, one of several proteins that assist in the late maturation steps of the functional core of the 30S ribosomal subunit. Associates with free 30S ribosomal subunits (but not with 30S subunits that are part of 70S ribosomes or polysomes). Required for efficient processing of 16S rRNA. May interact with the 5'-terminal helix region of 16S rRNA. In Shewanella oneidensis (strain ATCC 700550 / JCM 31522 / CIP 106686 / LMG 19005 / NCIMB 14063 / MR-1), this protein is Ribosome-binding factor A.